A 417-amino-acid chain; its full sequence is MSTATLEKAVAAKAPRKQKVILAEGNEAAALGVALARPDMVSVYPITPQSSLVEHVAKLIADGRMDADIVDAEGEHSVLSVLQGGALAGARTYTATCGPGLAFMFEPYFRTSGMRLPIVLTIVTRDGITPQSVWGGHQDAMTVREAGWIQVYCESVQEVLDTTVMAFKIAEHHDVMLPVNVCLDGNYLSYGASRVELPDQAVVDEFMGEKNVNWHVALDPLRPMAVDPLTGGTTGKGPQTFVRYRKGQCRGMQNALSVIEEVHADWAKRIGRSFAPLVEEYRLDDAEFAIMTLGSMTGAAKDAVDEAREAGKKIGLIKIKTFSPFPVEALKKALGKVKALGVIDRSVGFRWNCGPMYQETLGVLYRLGRHIPSISYIGGLAGADITIPHVHRVIDETEALLNGAVAPTEPVWLNEKD.

As to quaternary structure, dimer of heteropentamers composed of an alpha (PadG), a beta (PadI), a gamma (PadE), a delta (PadF) and an epsilon (PadH) subunit.

It catalyses the reaction phenylglyoxylate + NAD(+) + CoA = benzoyl-CoA + CO2 + NADH. With respect to regulation, activated by magnesium ions and thiamine diphosphate. Its function is as follows. Involved in the anaerobic metabolism of phenylalanine and phenylacetate. Catalyzes the oxidative decarboxylation of phenylglyoxylate to benzoyl-CoA and CO(2). It can also react slowly with 2-oxo-3-methylbutanoate and use different electron acceptors such as benzyl viologen, methyl viologen, FAD or FMN, but NAD seems to be the physiological electron acceptor. Also catalyzes an isotope exchange between CO(2) and the carboxyl group which proves partial or complete reversibility of the oxidative decarboxylation reaction. This Aromatoleum evansii (Azoarcus evansii) protein is NADH-dependent phenylglyoxylate dehydrogenase subunit alpha (padG).